We begin with the raw amino-acid sequence, 617 residues long: 1-deoxy-D-xylulose-5-phosphate synthase (617 aa).

Thiamine diphosphate contacts are provided by residues His77 and 118–120 (GHS). Asp149 contacts Mg(2+). Thiamine diphosphate contacts are provided by residues 150-151 (GA), Asn178, Tyr287, and Glu368. Asn178 contributes to the Mg(2+) binding site.

The protein belongs to the transketolase family. DXPS subfamily. In terms of assembly, homodimer. Mg(2+) is required as a cofactor. Requires thiamine diphosphate as cofactor.

The enzyme catalyses D-glyceraldehyde 3-phosphate + pyruvate + H(+) = 1-deoxy-D-xylulose 5-phosphate + CO2. The protein operates within metabolic intermediate biosynthesis; 1-deoxy-D-xylulose 5-phosphate biosynthesis; 1-deoxy-D-xylulose 5-phosphate from D-glyceraldehyde 3-phosphate and pyruvate: step 1/1. Its function is as follows. Catalyzes the acyloin condensation reaction between C atoms 2 and 3 of pyruvate and glyceraldehyde 3-phosphate to yield 1-deoxy-D-xylulose-5-phosphate (DXP). In Haemophilus ducreyi (strain 35000HP / ATCC 700724), this protein is 1-deoxy-D-xylulose-5-phosphate synthase.